Here is a 325-residue protein sequence, read N- to C-terminus: uncharacterized protein (325 aa).

2 coiled-coil regions span residues Val38–Ser69 and Ala201–Lys229.

This is an uncharacterized protein from Acanthamoeba polyphaga (Amoeba).